The following is a 92-amino-acid chain: MSKVCIIAWVYGRVQGVGFRYTTQYEAKRLGLTGYAKNLDDGSVEVVACGEEGQVEKLMQWLKSGGPRSARVERVLSEPHHPSGELTDFRIR.

A disulfide bridge connects residues Cys-5 and Cys-49. The 88-residue stretch at 5 to 92 folds into the Acylphosphatase-like domain; that stretch reads CIIAWVYGRV…SGELTDFRIR (88 aa). Active-site residues include Arg-20 and Asn-38.

The protein belongs to the acylphosphatase family.

The catalysed reaction is an acyl phosphate + H2O = a carboxylate + phosphate + H(+). The chain is Acylphosphatase from Escherichia coli O157:H7.